The primary structure comprises 269 residues: Formamidopyrimidine-DNA glycosylase (269 aa).

The active-site Schiff-base intermediate with DNA is the P2. The Proton donor role is filled by E3. Catalysis depends on K57, which acts as the Proton donor; for beta-elimination activity. Residues H90, R109, and K150 each coordinate DNA. Residues 235–269 form an FPG-type zinc finger; sequence QVYGRKGEPCRVCGTPIVATKHAQRATFYCRHCQK. R259 functions as the Proton donor; for delta-elimination activity in the catalytic mechanism.

The protein belongs to the FPG family. As to quaternary structure, monomer. Zn(2+) is required as a cofactor.

The enzyme catalyses Hydrolysis of DNA containing ring-opened 7-methylguanine residues, releasing 2,6-diamino-4-hydroxy-5-(N-methyl)formamidopyrimidine.. It catalyses the reaction 2'-deoxyribonucleotide-(2'-deoxyribose 5'-phosphate)-2'-deoxyribonucleotide-DNA = a 3'-end 2'-deoxyribonucleotide-(2,3-dehydro-2,3-deoxyribose 5'-phosphate)-DNA + a 5'-end 5'-phospho-2'-deoxyribonucleoside-DNA + H(+). Functionally, involved in base excision repair of DNA damaged by oxidation or by mutagenic agents. Acts as a DNA glycosylase that recognizes and removes damaged bases. Has a preference for oxidized purines, such as 7,8-dihydro-8-oxoguanine (8-oxoG). Has AP (apurinic/apyrimidinic) lyase activity and introduces nicks in the DNA strand. Cleaves the DNA backbone by beta-delta elimination to generate a single-strand break at the site of the removed base with both 3'- and 5'-phosphates. This chain is Formamidopyrimidine-DNA glycosylase, found in Salmonella dublin (strain CT_02021853).